Consider the following 173-residue polypeptide: Large ribosomal subunit protein uL10 (173 aa).

This sequence belongs to the universal ribosomal protein uL10 family. As to quaternary structure, part of the ribosomal stalk of the 50S ribosomal subunit. The N-terminus interacts with L11 and the large rRNA to form the base of the stalk. The C-terminus forms an elongated spine to which L12 dimers bind in a sequential fashion forming a multimeric L10(L12)X complex.

In terms of biological role, forms part of the ribosomal stalk, playing a central role in the interaction of the ribosome with GTP-bound translation factors. The sequence is that of Large ribosomal subunit protein uL10 from Chlorobaculum parvum (strain DSM 263 / NCIMB 8327) (Chlorobium vibrioforme subsp. thiosulfatophilum).